Here is a 384-residue protein sequence, read N- to C-terminus: Sensor protein VanS (384 aa).

2 helical membrane-spanning segments follow: residues 21-41 and 76-96; these read MYIV…RSMI and IDIF…RVML. The Histidine kinase domain occupies 161–376; the sequence is YLAHDIKTPL…TFRVELPAMP (216 aa). The residue at position 164 (His164) is a Phosphohistidine; by autocatalysis. Residues 221–384 are involved in low-affinity ATP-binding. Exhibits higher affinity for ATP than GTP; that stretch reads QTITLTKTHI…MPDLVDKRRS (164 aa).

Post-translationally, autophosphorylated.

The protein localises to the membrane. The catalysed reaction is ATP + protein L-histidine = ADP + protein N-phospho-L-histidine.. With respect to regulation, phosphorylation of VanR inhibited by EDTA. Its function is as follows. Member of the two-component regulatory system VanS/VanR. Functions as a sensor protein kinase which is autophosphorylated at a histidine residue in response to environmental stimuli, such as glycopeptide antibiotics. VanS transfers its phosphate group to transcriptional regulatory protein VanR, thereby modulating expression of target genes. Binds directly to, and autophosphorylation activity is enhanced by, the glycopeptides vancomycin and teicoplanin, in vitro. However it has also been reported that autophosphorylation, phosphate transfer to VanR and dephosphorylation of phospho-VanR are all unaffected by the presence of vancomycin, in vitro. In the absence of vancomycin, negatively regulates VanR-mediated activation of vanS, vanH, vanA and vanX, probably as a result of dephosphorylating phospho-VanR. May inhibit promoter-specific DNA binding by VanR. Involved in conferring vancomycin resistance. This chain is Sensor protein VanS, found in Enterococcus faecium (Streptococcus faecium).